We begin with the raw amino-acid sequence, 243 residues long: Venom nerve growth factor (243 aa).

The signal sequence occupies residues Met-1–Ala-18. Positions Ala-19–Arg-125 are excised as a propeptide. The interval His-45 to Asp-66 is disordered. A compositionally biased stretch (basic and acidic residues) spans Glu-46–Asp-66. Cystine bridges form between Cys-139–Cys-204, Cys-182–Cys-232, and Cys-192–Cys-234. The N-linked (GlcNAc...) asparagine glycan is linked to Asn-148.

Belongs to the NGF-beta family. Homodimer; non-covalently linked. In terms of tissue distribution, expressed by the venom gland.

It localises to the secreted. Nerve growth factor is important for the development and maintenance of the sympathetic and sensory nervous systems. It stimulates division and differentiation of sympathetic and embryonic sensory neurons as well as basal forebrain cholinergic neurons in the brain. Its relevance in the snake venom is not clear. However, it has been shown to inhibit metalloproteinase-dependent proteolysis of platelet glycoprotein Ib alpha, suggesting a metalloproteinase inhibition to prevent metalloprotease autodigestion and/or protection against prey proteases. Binds a lipid between the two protein chains in the homodimer. The lipid-bound form promotes histamine relase from mouse mast cells, contrary to the lipid-free form. This chain is Venom nerve growth factor, found in Cryptophis nigrescens (Eastern small-eyed snake).